Reading from the N-terminus, the 629-residue chain is tRNA uridine 5-carboxymethylaminomethyl modification enzyme MnmG (629 aa).

FAD is bound by residues 13 to 18, V125, and S180; that span reads GGGHAG. NAD(+) is bound at residue 273-287; the sequence is GPRYCPSIEDKVMRF. Position 370 (Q370) interacts with FAD.

It belongs to the MnmG family. In terms of assembly, homodimer. Heterotetramer of two MnmE and two MnmG subunits. The cofactor is FAD.

The protein resides in the cytoplasm. NAD-binding protein involved in the addition of a carboxymethylaminomethyl (cmnm) group at the wobble position (U34) of certain tRNAs, forming tRNA-cmnm(5)s(2)U34. The chain is tRNA uridine 5-carboxymethylaminomethyl modification enzyme MnmG from Salmonella dublin (strain CT_02021853).